The chain runs to 264 residues: TLC domain-containing protein 2 (264 aa).

The next 6 helical transmembrane spans lie at 3–23 (PTGL…HWGL), 42–62 (LCVS…GLSL), 77–97 (WALV…ADLL), 114–134 (VVVS…FSMV), 169–189 (SLAT…LWLF), and 199–219 (LVTL…ILGI). Residues 34 to 227 (RDRWQWWNLC…GIRILVNDVL (194 aa)) enclose the TLC domain. The interval 230 to 264 (RPHPPSPGHEKTRGTRTRRDNGPVTSNSSTLSLKD) is disordered. The span at 237–250 (GHEKTRGTRTRRDN) shows a compositional bias: basic and acidic residues. Residues 252–264 (PVTSNSSTLSLKD) are compositionally biased toward polar residues.

This sequence belongs to the TLCD family.

The protein localises to the cell membrane. In terms of biological role, regulates the composition and fluidity of the plasma membrane. Inhibits the incorporation of membrane-fluidizing phospholipids containing omega-3 long-chain polyunsaturated fatty acids (LCPUFA) and thereby promotes membrane rigidity. Does not appear to have any effect on LCPUFA synthesis. This chain is TLC domain-containing protein 2 (TLCD2), found in Homo sapiens (Human).